The primary structure comprises 754 residues: 1,4-alpha-glucan branching enzyme GlgB (754 aa).

Asp-431 functions as the Nucleophile in the catalytic mechanism. Glu-484 serves as the catalytic Proton donor.

Belongs to the glycosyl hydrolase 13 family. GlgB subfamily. Monomer.

It carries out the reaction Transfers a segment of a (1-&gt;4)-alpha-D-glucan chain to a primary hydroxy group in a similar glucan chain.. It participates in glycan biosynthesis; glycogen biosynthesis. Its function is as follows. Catalyzes the formation of the alpha-1,6-glucosidic linkages in glycogen by scission of a 1,4-alpha-linked oligosaccharide from growing alpha-1,4-glucan chains and the subsequent attachment of the oligosaccharide to the alpha-1,6 position. The chain is 1,4-alpha-glucan branching enzyme GlgB from Prochlorococcus marinus (strain MIT 9301).